The following is a 325-amino-acid chain: Elongation factor P--(R)-beta-lysine ligase (325 aa).

76–78 serves as a coordination point for substrate; that stretch reads SPE. ATP-binding positions include 100 to 102 and N109; that span reads RNE. Y118 is a binding site for substrate. 244-245 is a binding site for ATP; it reads EL. E251 lines the substrate pocket. G300 provides a ligand contact to ATP.

This sequence belongs to the class-II aminoacyl-tRNA synthetase family. EpmA subfamily. Homodimer.

The catalysed reaction is D-beta-lysine + L-lysyl-[protein] + ATP = N(6)-((3R)-3,6-diaminohexanoyl)-L-lysyl-[protein] + AMP + diphosphate + H(+). Its function is as follows. With EpmB is involved in the beta-lysylation step of the post-translational modification of translation elongation factor P (EF-P). Catalyzes the ATP-dependent activation of (R)-beta-lysine produced by EpmB, forming a lysyl-adenylate, from which the beta-lysyl moiety is then transferred to the epsilon-amino group of a conserved specific lysine residue in EF-P. The chain is Elongation factor P--(R)-beta-lysine ligase from Hamiltonella defensa subsp. Acyrthosiphon pisum (strain 5AT).